The sequence spans 499 residues: UDP-N-acetylmuramoylalanine--D-glutamate ligase (499 aa).

120 to 126 (GTNGKTT) contributes to the ATP binding site.

This sequence belongs to the MurCDEF family.

The protein localises to the cytoplasm. It carries out the reaction UDP-N-acetyl-alpha-D-muramoyl-L-alanine + D-glutamate + ATP = UDP-N-acetyl-alpha-D-muramoyl-L-alanyl-D-glutamate + ADP + phosphate + H(+). Its pathway is cell wall biogenesis; peptidoglycan biosynthesis. Functionally, cell wall formation. Catalyzes the addition of glutamate to the nucleotide precursor UDP-N-acetylmuramoyl-L-alanine (UMA). This is UDP-N-acetylmuramoylalanine--D-glutamate ligase from Nostoc punctiforme (strain ATCC 29133 / PCC 73102).